The following is a 313-amino-acid chain: Adhesin MafA 2/3 (313 aa).

The first 14 residues, 1–14, serve as a signal peptide directing secretion; it reads MKTLLLLIPLVLTA. A lipid anchor (N-palmitoyl cysteine) is attached at Cys-15. The S-diacylglycerol cysteine moiety is linked to residue Cys-15. Polar residues predominate over residues 282–298; it reads GDTTAQNRPDFKQNNGK. Residues 282–313 form a disordered region; the sequence is GDTTAQNRPDFKQNNGKNPDVGNEVIRRRKGG.

Belongs to the MafA family.

Its subcellular location is the cell outer membrane. The protein is Adhesin MafA 2/3 (mafA2) of Neisseria gonorrhoeae (strain ATCC 700825 / FA 1090).